We begin with the raw amino-acid sequence, 297 residues long: Adrenocorticotropic hormone receptor (297 aa).

Topologically, residues 1-23 (MKHITDLYESVNSTMSNKSDCPP) are extracellular. Residues asparagine 12 and asparagine 17 are each glycosylated (N-linked (GlcNAc...) asparagine). 2 disulfides stabilise this stretch: cysteine 21-cysteine 253 and cysteine 245-cysteine 251. A helical transmembrane segment spans residues 24-49 (VVLPEEVFFTISVIGVLENLIVLLAV). At 50–58 (IKNKNLQSP) the chain is on the cytoplasmic side. Residues 59–79 (MYFFICSLAISDMLGSLYKIL) form a helical membrane-spanning segment. Over 80–104 (ENILIIFRNMGYLEPRGGFESTADD) the chain is Extracellular. The chain crosses the membrane as a helical span at residues 105–126 (VVDSLFILSLLGSICSLSAIAA). At 127–147 (DRYITIFHALQYQRLVTPRRA) the chain is on the cytoplasmic side. The helical transmembrane segment at 148–168 (AVVLLIIWACCIGSGITIVTF) threads the bilayer. Residues 169–180 (SHHVPAVIAFTA) are Extracellular-facing. The helical transmembrane segment at 181 to 199 (LFPLMLVFILCLYGHMFLL) threads the bilayer. Over 200 to 217 (ARSHARRVSTLPRANMKG) the chain is Cytoplasmic. A helical transmembrane segment spans residues 218 to 244 (AITLTVLLGVFIFCWAPFVLHILLMTF). Residues 245-256 (CPADPYCACYLA) lie on the Extracellular side of the membrane. Residues 257-278 (LFQVNAVLIMCNAIIDPFIYAF) traverse the membrane as a helical segment. Over 279 to 297 (RSPELRDAFKKMIICKRYP) the chain is Cytoplasmic. A lipid anchor (S-palmitoyl cysteine) is attached at cysteine 293.

This sequence belongs to the G-protein coupled receptor 1 family. Homodimer. Interacts with corticotropin (ACTH). Interacts with MRAP; this interaction targets MC2R to the plasma membrane. Interacts with MRAP2; competing with MRAP for binding to MC2R and impairing the binding of corticotropin (ACTH). In terms of processing, ubiquitinated by MGRN1 that may be involved in post-endocytic trafficking and/or degradation of internalized receptor. In terms of tissue distribution, expressed in skin and adrenal gland tissues.

The protein localises to the cell membrane. Functionally, hormone receptor primarily expressed in adrenal cortex that plays a key role in regulating adrenocortical function. Upon corticotropin (ACTH) binding, facilitates the release of adrenal glucocorticoids, including cortisol and corticosterone. In addition, MC2R is required for fetal and neonatal adrenal gland development. Mechanistically, activates adenylate cyclase (cAMP), the MAPK cascade as well as the cAMP-dependent protein kinase A pathway leading to steroidogenic factor 1/NR5A1-mediated transcriptional activation. The sequence is that of Adrenocorticotropic hormone receptor (MC2R) from Sus scrofa (Pig).